The primary structure comprises 658 residues: Ubiquilin-3 (658 aa).

The Ubiquitin-like domain maps to 22–96 (IRVTVKTPKD…VHLVIKMQRR (75 aa)). The STI1 domain maps to 194–233 (NPHMQHLIQQNPEIGHILNNPEIMRQTMEFLRNPSMMQEM). Residues 280–291 (TATTASTTTTSS) show a composition bias toward low complexity. Disordered regions lie at residues 280–336 (TATT…RNRL) and 362–478 (YLQG…PESP). Gly residues predominate over residues 312 to 323 (VSGGRQGRGGRQ). Composition is skewed to polar residues over residues 362–379 (YLQG…SPLS), 389–400 (SSPKSGSGQSLP), and 438–469 (TGPS…SLMS). A UBA domain is found at 614–658 (QLEAHFRVQLEQLRAMGFLNLEANLQALIATEGDVDAAVEKLRKS).

As to expression, testis-specific (at protein level).

This is Ubiquilin-3 (Ubqln3) from Mus musculus (Mouse).